A 304-amino-acid polypeptide reads, in one-letter code: Putative S-adenosyl-L-methionine-dependent methyltransferase MAV_4444 (304 aa).

S-adenosyl-L-methionine is bound by residues Asp-130 and 159–160 (DL).

Belongs to the UPF0677 family.

Functionally, exhibits S-adenosyl-L-methionine-dependent methyltransferase activity. This Mycobacterium avium (strain 104) protein is Putative S-adenosyl-L-methionine-dependent methyltransferase MAV_4444.